The primary structure comprises 598 residues: Elongation factor 4 (598 aa).

A tr-type G domain is found at 4–185 (KNIRNFSIIA…TIIAKIPPPK (182 aa)). GTP is bound by residues 16–21 (DHGKST) and 132–135 (NKID).

The protein belongs to the TRAFAC class translation factor GTPase superfamily. Classic translation factor GTPase family. LepA subfamily.

The protein resides in the cell membrane. The enzyme catalyses GTP + H2O = GDP + phosphate + H(+). Required for accurate and efficient protein synthesis under certain stress conditions. May act as a fidelity factor of the translation reaction, by catalyzing a one-codon backward translocation of tRNAs on improperly translocated ribosomes. Back-translocation proceeds from a post-translocation (POST) complex to a pre-translocation (PRE) complex, thus giving elongation factor G a second chance to translocate the tRNAs correctly. Binds to ribosomes in a GTP-dependent manner. This Mycoplasma genitalium (strain ATCC 33530 / DSM 19775 / NCTC 10195 / G37) (Mycoplasmoides genitalium) protein is Elongation factor 4.